The primary structure comprises 626 residues: Phosphomethylpyrimidine synthase (626 aa).

Substrate is bound by residues asparagine 237, methionine 266, tyrosine 295, histidine 331, 351 to 353 (SRG), 392 to 395 (DGLR), and glutamate 431. Histidine 435 is a Zn(2+) binding site. Position 458 (tyrosine 458) interacts with substrate. Histidine 499 contacts Zn(2+). Residues cysteine 579, cysteine 582, and cysteine 587 each contribute to the [4Fe-4S] cluster site.

The protein belongs to the ThiC family. Homodimer. The cofactor is [4Fe-4S] cluster.

The catalysed reaction is 5-amino-1-(5-phospho-beta-D-ribosyl)imidazole + S-adenosyl-L-methionine = 4-amino-2-methyl-5-(phosphooxymethyl)pyrimidine + CO + 5'-deoxyadenosine + formate + L-methionine + 3 H(+). It functions in the pathway cofactor biosynthesis; thiamine diphosphate biosynthesis. Functionally, catalyzes the synthesis of the hydroxymethylpyrimidine phosphate (HMP-P) moiety of thiamine from aminoimidazole ribotide (AIR) in a radical S-adenosyl-L-methionine (SAM)-dependent reaction. The sequence is that of Phosphomethylpyrimidine synthase from Cupriavidus pinatubonensis (strain JMP 134 / LMG 1197) (Cupriavidus necator (strain JMP 134)).